The following is a 522-amino-acid chain: Anthranilate synthase component 1 (522 aa).

Residues Ser40 and Pro292–Met294 contribute to the L-tryptophan site. A chorismate-binding site is contributed by Gly329–Thr330. Position 362 (Glu362) interacts with Mg(2+). Chorismate-binding positions include Tyr450, Arg470, Gly484–Gly486, and Gly486. Glu499 contacts Mg(2+).

Belongs to the anthranilate synthase component I family. Heterotetramer consisting of two non-identical subunits: a beta subunit (TrpG) and a large alpha subunit (TrpE). The cofactor is Mg(2+).

The catalysed reaction is chorismate + L-glutamine = anthranilate + pyruvate + L-glutamate + H(+). It participates in amino-acid biosynthesis; L-tryptophan biosynthesis; L-tryptophan from chorismate: step 1/5. With respect to regulation, feedback inhibited by tryptophan. Part of a heterotetrameric complex that catalyzes the two-step biosynthesis of anthranilate, an intermediate in the biosynthesis of L-tryptophan. In the first step, the glutamine-binding beta subunit (TrpG) of anthranilate synthase (AS) provides the glutamine amidotransferase activity which generates ammonia as a substrate that, along with chorismate, is used in the second step, catalyzed by the large alpha subunit of AS (TrpE) to produce anthranilate. In the absence of TrpG, TrpE can synthesize anthranilate directly from chorismate and high concentrations of ammonia. In Buchnera aphidicola subsp. Baizongia pistaciae (strain Bp), this protein is Anthranilate synthase component 1 (trpE).